A 394-amino-acid chain; its full sequence is uncharacterized protein (394 aa).

2 positions are modified to phosphoserine: serine 117 and serine 121. 3 disordered regions span residues 177–295 (DSDE…PGTF), 315–347 (KRSIMLPQDIDPTFPDSEPEDDGHASSTVGSLS), and 370–394 (SSEVLRNSKSPPLDIARKAVGAHRV). Positions 178-190 (SDEEDEVDDEEIE) are enriched in acidic residues. 2 stretches are compositionally biased toward polar residues: residues 191–207 (SFNSFSRKMQTISNSRY) and 216–230 (EKQSCSSESDRVSQI). Acidic residues-rich tracts occupy residues 231–263 (SDDEEDEEGSADEEDEEDSDVELSESSLSDDED) and 284–295 (IPDDTDFVPGTF). Positions 370–379 (SSEVLRNSKS) are enriched in polar residues. A Phosphoserine modification is found at serine 379.

The protein resides in the nucleus. This is an uncharacterized protein from Schizosaccharomyces pombe (strain 972 / ATCC 24843) (Fission yeast).